Reading from the N-terminus, the 363-residue chain is tRNA N6-adenosine threonylcarbamoyltransferase (363 aa).

Residues histidine 117 and histidine 121 each contribute to the Fe cation site. Residues 139-143 (LVSGG), aspartate 172, glycine 185, and asparagine 287 contribute to the substrate site. Aspartate 315 lines the Fe cation pocket.

Belongs to the KAE1 / TsaD family. Requires Fe(2+) as cofactor.

It is found in the cytoplasm. The enzyme catalyses L-threonylcarbamoyladenylate + adenosine(37) in tRNA = N(6)-L-threonylcarbamoyladenosine(37) in tRNA + AMP + H(+). In terms of biological role, required for the formation of a threonylcarbamoyl group on adenosine at position 37 (t(6)A37) in tRNAs that read codons beginning with adenine. Is involved in the transfer of the threonylcarbamoyl moiety of threonylcarbamoyl-AMP (TC-AMP) to the N6 group of A37, together with TsaE and TsaB. TsaD likely plays a direct catalytic role in this reaction. The sequence is that of tRNA N6-adenosine threonylcarbamoyltransferase from Cereibacter sphaeroides (strain ATCC 17025 / ATH 2.4.3) (Rhodobacter sphaeroides).